The chain runs to 622 residues: Palmitoyltransferase ZDHHC13 (622 aa).

N-acetylmethionine is present on M1. At 1–291 the chain is on the cytoplasmic side; sequence MEGPGLGSQC…RLWRWLQKCE (291 aa). ANK repeat units follow at residues 43–78, 81–110, 115–144, 148–177, 181–211, 216–245, and 249–277; these read PLIE…VRQP, ENVS…VVDQ, LNST…DPTL, EGFS…SVNM, NGQT…SLNV, HQNT…SLDI, and KGET…KMRA. The chain crosses the membrane as a helical span at residues 292–312; the sequence is LFLLLMLSVITMWAIGYILDF. Over 313-320 the chain is Lumenal; that stretch reads NSDSWLLK. The chain crosses the membrane as a helical span at residues 321–341; that stretch reads GCLLVTLFFLTSLFPRFLVGY. Residues 342–347 are Cytoplasmic-facing; sequence KNLVYL. A helical transmembrane segment spans residues 348–368; the sequence is PTAFLLSSVFWIFMTWFILFF. Topologically, residues 369-370 are lumenal; that stretch reads PD. The helical transmembrane segment at 371–391 threads the bilayer; the sequence is LAGAPFYFSFIFSIVAFLYFF. Residues 392 to 470 are Cytoplasmic-facing; that stretch reads YKTWATDPGF…RCIGFGNHHY (79 aa). The DHHC domain occupies 426-476; the sequence is TFCTSCLIRKPLRSLHCHVCNCCVARYDQHCLWTGRCIGFGNHHYYIFFLF. Residue C456 is the S-palmitoyl cysteine intermediate of the active site. Residues 471-491 form a helical membrane-spanning segment; that stretch reads YIFFLFFLSMVCGWIIYGSFI. Topologically, residues 492–518 are lumenal; that stretch reads YLSSHCATTFKEDGLWTYLNQIVACSP. A helical transmembrane segment spans residues 519-539; sequence WVLYILMLATFHFSWSTFLLL. Residues 540 to 622 lie on the Cytoplasmic side of the membrane; sequence NQLFQIAFLG…PAREKVLRSV (83 aa).

The protein belongs to the DHHC palmitoyltransferase family. AKR/ZDHHC17 subfamily. In terms of assembly, interacts (via ANK repeats) with CLIP3. Interacts (via ANK repeats) with DNAJC5 (via C-terminus). Interacts (via ANK repeats) with HTT. Interacts (via ANK repeats) with MAP6. Interacts (via ANK repeats) with SNAP23. Interacts (via ANK repeats) with SNAP25. May interact (via ANK repeats) with SPRED2.

It localises to the golgi apparatus membrane. It is found in the cytoplasmic vesicle membrane. It carries out the reaction L-cysteinyl-[protein] + hexadecanoyl-CoA = S-hexadecanoyl-L-cysteinyl-[protein] + CoA. Functionally, palmitoyltransferase that could catalyze the addition of palmitate onto various protein substrates. Palmitoyltransferase for HTT and GAD2. May play a role in Mg(2+) transport. This Homo sapiens (Human) protein is Palmitoyltransferase ZDHHC13.